The following is a 195-amino-acid chain: MTHSTDITTLARWFAADFSNQQQAFDNPPLFAHIRVCMRPLPYQLLNGLSLYLEQAYDITLNQPYRVRVLKLVPSENHIEIENYIIDQEAEFYGASRDPQRLKNLKTEYIKKLPGCTFITKWTGKSFKGEVEPGKGCTVVREGKSTYLKSYFEINEHKFISHDTGYDPETDQQVWGAIAGPFEFVRWASFADEVI.

It belongs to the CpcT/CpeT biliprotein lyase family.

In terms of biological role, covalently attaches a chromophore to Cys residue(s) of phycobiliproteins. The sequence is that of Chromophore lyase CpcT/CpeT 2 from Trichodesmium erythraeum (strain IMS101).